The sequence spans 839 residues: A disintegrin and metalloproteinase with thrombospondin motifs 4 (839 aa).

Residues 1-51 form the signal peptide; sequence MSHMDSHPGRGLADGWLWGIQPRLLLPTVPVSGSRLVWLLLLASLLPSAWP. A propeptide spanning residues 52-212 is cleaved from the precursor; it reads ASPLPREEEI…PSPSPRRAKR (161 aa). Residue Asn-68 is glycosylated (N-linked (GlcNAc...) asparagine). The disordered stretch occupies residues 166–209; the sequence is EGGAPNSAGGPGAHILRRKSPVSGQGPMCNVKAPPGKPSPSPRR. The Cysteine switch motif lies at 192 to 199; it reads PMCNVKAP. Cys-194 provides a ligand contact to Zn(2+). One can recognise a Peptidase M12B domain in the interval 218 to 428; sequence RFVETLVVAD…GFGHCLLDKP (211 aa). Disulfide bonds link Cys-293-Cys-345, Cys-322-Cys-327, Cys-339-Cys-423, Cys-377-Cys-407, Cys-449-Cys-472, Cys-460-Cys-482, Cys-467-Cys-501, Cys-495-Cys-506, Cys-532-Cys-569, Cys-536-Cys-574, and Cys-547-Cys-559. His-361 contributes to the Zn(2+) binding site. Residue Glu-362 is part of the active site. 2 residues coordinate Zn(2+): His-365 and His-371. The region spanning 437–519 is the Disintegrin domain; sequence TFPGKDYDAD…DQLQAFNVPQ (83 aa). In terms of domain architecture, TSP type-1 spans 520-575; it reads AGGWGPWGSWGDCSRSCGGGVQFSSRDCTRPVPRNGGKYCEGRRTRFRSCNTQDCP. A spacer region spans residues 686 to 839; it reads SKQSGSFKKF…LRRRSWAGRK (154 aa).

Interacts with SRPX2. It depends on Zn(2+) as a cofactor. The precursor is cleaved by a furin endopeptidase. Post-translationally, glycosylated. Can be O-fucosylated by POFUT2 on a serine or a threonine residue found within the consensus sequence C1-X(2)-(S/T)-C2-G of the TSP type-1 repeat domains where C1 and C2 are the first and second cysteine residue of the repeat, respectively. Fucosylated repeats can then be further glycosylated by the addition of a beta-1,3-glucose residue by the glucosyltransferase, B3GALTL. Fucosylation mediates the efficient secretion of ADAMTS family members. Can also be C-glycosylated with one or two mannose molecules on tryptophan residues within the consensus sequence W-X-X-W of the TPRs, and N-glycosylated. These other glycosylations can also facilitate secretion.

Its subcellular location is the secreted. The protein localises to the extracellular space. The protein resides in the extracellular matrix. It carries out the reaction Glutamyl endopeptidase. Bonds cleaved include 370-Thr-Glu-Gly-Glu-|-Ala-Arg-Gly-Ser-377 in the interglobular domain of mammalian aggrecan.. In terms of biological role, cleaves aggrecan, a cartilage proteoglycan, at the '392-Glu-|-Ala-393' site and may be involved in its turnover. Also cleaves COMP. May play an important role in the destruction of aggrecan in arthritic diseases. This Bos taurus (Bovine) protein is A disintegrin and metalloproteinase with thrombospondin motifs 4 (ADAMTS4).